The sequence spans 59 residues: Small ribosomal subunit protein bS21 (59 aa).

A disordered region spans residues 27 to 59; that stretch reads GLMAEMRKREHYEKPSVRRKKKAQARNKKKRYA. A compositionally biased stretch (basic and acidic residues) spans 31 to 42; that stretch reads EMRKREHYEKPS. The segment covering 43–59 has biased composition (basic residues); it reads VRRKKKAQARNKKKRYA.

Belongs to the bacterial ribosomal protein bS21 family.

This Carboxydothermus hydrogenoformans (strain ATCC BAA-161 / DSM 6008 / Z-2901) protein is Small ribosomal subunit protein bS21.